Reading from the N-terminus, the 325-residue chain is MSWLSPELIEILLTILKAVVILLVVVTCGAFMSFGERRLLGLFQNRYGPNRVGWGGSLQLVADMIKMFFKEDWIPKFSDRVIFTLAPMIAFTSLLLAFAIVPVSPGWVVADLNIGILFFLMMAGLAVYAVLFAGWSSNNKYSLLGAMRASAQTLSYEVFLGLSLMGVVAQAGSFNMTDIVNSQAHVWNVIPQFFGFITFAIAGVAVCHRHPFDQPEAEQELADGYHIEYSGMKFGLFFVGEYIGIVTISALMVTLFFGGWQGPFLPPFIWFALKTAFFMMMFILIRASLPRPRYDQVMSFGWKICLPLTLINLLVTAAVILWQAQ.

The next 8 helical transmembrane spans lie at 11–31 (ILLTILKAVVILLVVVTCGAF), 81–101 (VIFTLAPMIAFTSLLLAFAIV), 114–134 (IGILFFLMMAGLAVYAVLFAG), 154–174 (LSYEVFLGLSLMGVVAQAGSF), 186–206 (VWNVIPQFFGFITFAIAGVAV), 237–257 (FFVGEYIGIVTISALMVTLFF), 265–285 (LPPFIWFALKTAFFMMMFILI), and 304–324 (ICLPLTLINLLVTAAVILWQA).

The protein belongs to the complex I subunit 1 family. NDH-1 is composed of 13 different subunits. Subunits NuoA, H, J, K, L, M, N constitute the membrane sector of the complex.

The protein resides in the cell inner membrane. It catalyses the reaction a quinone + NADH + 5 H(+)(in) = a quinol + NAD(+) + 4 H(+)(out). Functionally, NDH-1 shuttles electrons from NADH, via FMN and iron-sulfur (Fe-S) centers, to quinones in the respiratory chain. The immediate electron acceptor for the enzyme in this species is believed to be ubiquinone. Couples the redox reaction to proton translocation (for every two electrons transferred, four hydrogen ions are translocated across the cytoplasmic membrane), and thus conserves the redox energy in a proton gradient. This subunit may bind ubiquinone. The protein is NADH-quinone oxidoreductase subunit H of Escherichia fergusonii (strain ATCC 35469 / DSM 13698 / CCUG 18766 / IAM 14443 / JCM 21226 / LMG 7866 / NBRC 102419 / NCTC 12128 / CDC 0568-73).